The chain runs to 219 residues: Ribose-5-phosphate isomerase A (219 aa).

Substrate contacts are provided by residues 28–31, 81–84, and 94–97; these read TGST, DGAD, and KGGG. The active-site Proton acceptor is glutamate 103. Lysine 121 contacts substrate.

This sequence belongs to the ribose 5-phosphate isomerase family. In terms of assembly, homodimer.

The catalysed reaction is aldehydo-D-ribose 5-phosphate = D-ribulose 5-phosphate. Its pathway is carbohydrate degradation; pentose phosphate pathway; D-ribose 5-phosphate from D-ribulose 5-phosphate (non-oxidative stage): step 1/1. Its function is as follows. Catalyzes the reversible conversion of ribose-5-phosphate to ribulose 5-phosphate. The polypeptide is Ribose-5-phosphate isomerase A (Shewanella sp. (strain MR-4)).